The following is a 599-amino-acid chain: Elongation factor 4 (599 aa).

The tr-type G domain maps to Lys-2 to Gln-184. GTP contacts are provided by residues Asp-14 to Thr-19 and Asn-131 to Asp-134.

The protein belongs to the TRAFAC class translation factor GTPase superfamily. Classic translation factor GTPase family. LepA subfamily.

The protein resides in the cell inner membrane. It catalyses the reaction GTP + H2O = GDP + phosphate + H(+). Its function is as follows. Required for accurate and efficient protein synthesis under certain stress conditions. May act as a fidelity factor of the translation reaction, by catalyzing a one-codon backward translocation of tRNAs on improperly translocated ribosomes. Back-translocation proceeds from a post-translocation (POST) complex to a pre-translocation (PRE) complex, thus giving elongation factor G a second chance to translocate the tRNAs correctly. Binds to ribosomes in a GTP-dependent manner. The chain is Elongation factor 4 from Salmonella gallinarum (strain 287/91 / NCTC 13346).